A 234-amino-acid polypeptide reads, in one-letter code: Demethylmenaquinone methyltransferase (234 aa).

Residues threonine 58, aspartate 79, and 106 to 107 (NA) contribute to the S-adenosyl-L-methionine site.

This sequence belongs to the class I-like SAM-binding methyltransferase superfamily. MenG/UbiE family.

It catalyses the reaction a 2-demethylmenaquinol + S-adenosyl-L-methionine = a menaquinol + S-adenosyl-L-homocysteine + H(+). It participates in quinol/quinone metabolism; menaquinone biosynthesis; menaquinol from 1,4-dihydroxy-2-naphthoate: step 2/2. Methyltransferase required for the conversion of demethylmenaquinol (DMKH2) to menaquinol (MKH2). This is Demethylmenaquinone methyltransferase from Geobacillus sp. (strain WCH70).